Consider the following 218-residue polypeptide: Elongation factor Ts (218 aa).

The interval Thr82 to Val85 is involved in Mg(2+) ion dislocation from EF-Tu.

It belongs to the EF-Ts family.

The protein resides in the cytoplasm. In terms of biological role, associates with the EF-Tu.GDP complex and induces the exchange of GDP to GTP. It remains bound to the aminoacyl-tRNA.EF-Tu.GTP complex up to the GTP hydrolysis stage on the ribosome. This Prochlorococcus marinus (strain NATL2A) protein is Elongation factor Ts.